The following is a 281-amino-acid chain: Putative phosphatase MPN_264 (281 aa).

The Nucleophile role is filled by Asp-8. Mg(2+) is bound at residue Asp-8. Leu-9 is a phosphate binding site. Asp-10 is a binding site for Mg(2+). Phosphate contacts are provided by residues Thr-44–Gly-45 and Lys-205. The Mg(2+) site is built by Asp-228 and Ser-229. Asn-231 serves as a coordination point for phosphate.

It belongs to the HAD-like hydrolase superfamily. Cof family. Requires Mg(2+) as cofactor.

This is Putative phosphatase MPN_264 from Mycoplasma pneumoniae (strain ATCC 29342 / M129 / Subtype 1) (Mycoplasmoides pneumoniae).